A 601-amino-acid polypeptide reads, in one-letter code: Deuterosome assembly protein 1 (601 aa).

3 coiled-coil regions span residues 14-59 (CEAE…NAQT), 86-196 (TQNY…GKKQ), and 226-277 (IEKL…ELQS). A disordered region spans residues 305 to 329 (AQDNRKRVESSYSPSPKEAERKRKE). Positions 354-397 (EEGLCSEQERLRSEISELTQELHQKEVTIATVMKKAALLERQLK) form a coiled coil. Residue serine 544 is modified to Phosphoserine. Positions 555 to 586 (AAQHFLMEEERRAKELEKLLNTHIDELQRHTE) form a coiled coil.

Belongs to the CEP63 family. Interacts with CEP152; the interaction is mutually exclusive with CEP63. Highly enriched in multicilia-abundant tissues (trachea and oviduct).

It localises to the cytoplasm. Its function is as follows. Key structural component of the deuterosome, a structure that promotes de novo centriole amplification in multiciliated cells. Deuterosome-mediated centriole amplification occurs in terminally differentiated multiciliated cells and can generate more than 100 centrioles. Probably sufficient for the specification and formation of the deuterosome inner core. Interacts with CEP152 and recruits PLK4 to activate centriole biogenesis. The chain is Deuterosome assembly protein 1 from Mus musculus (Mouse).